A 503-amino-acid chain; its full sequence is uncharacterized protein (503 aa).

2 consecutive ABC transporter domains span residues Val8–Asp249 and Ile261–Ile499. Residue Gly43–Ser50 coordinates ATP.

Belongs to the ABC transporter superfamily.

Probably part of a binding-protein-dependent transport system YphDEF. Probably responsible for energy coupling to the transport system. This is an uncharacterized protein from Escherichia coli (strain K12).